Reading from the N-terminus, the 597-residue chain is Arginine--tRNA ligase (597 aa).

Positions 125-135 match the 'HIGH' region motif; the sequence is PNTNKPLHLGH.

This sequence belongs to the class-I aminoacyl-tRNA synthetase family. Monomer.

The protein resides in the cytoplasm. The catalysed reaction is tRNA(Arg) + L-arginine + ATP = L-arginyl-tRNA(Arg) + AMP + diphosphate. The polypeptide is Arginine--tRNA ligase (Bacteroides fragilis (strain YCH46)).